We begin with the raw amino-acid sequence, 805 residues long: DNA gyrase subunit B (805 aa).

The 116-residue stretch at 435-550 folds into the Toprim domain; it reads SEIFIVEGDS…RGYIYIAQPP (116 aa). Residues Glu441, Asp515, and Asp517 each contribute to the Mg(2+) site.

The protein belongs to the type II topoisomerase GyrB family. As to quaternary structure, heterotetramer, composed of two GyrA and two GyrB chains. In the heterotetramer, GyrA contains the active site tyrosine that forms a transient covalent intermediate with DNA, while GyrB binds cofactors and catalyzes ATP hydrolysis. It depends on Mg(2+) as a cofactor. The cofactor is Mn(2+). Requires Ca(2+) as cofactor.

It is found in the cytoplasm. It catalyses the reaction ATP-dependent breakage, passage and rejoining of double-stranded DNA.. In terms of biological role, a type II topoisomerase that negatively supercoils closed circular double-stranded (ds) DNA in an ATP-dependent manner to modulate DNA topology and maintain chromosomes in an underwound state. Negative supercoiling favors strand separation, and DNA replication, transcription, recombination and repair, all of which involve strand separation. Also able to catalyze the interconversion of other topological isomers of dsDNA rings, including catenanes and knotted rings. Type II topoisomerases break and join 2 DNA strands simultaneously in an ATP-dependent manner. The protein is DNA gyrase subunit B of Caulobacter vibrioides (strain ATCC 19089 / CIP 103742 / CB 15) (Caulobacter crescentus).